Consider the following 341-residue polypeptide: GDT1-like protein 1, chloroplastic (341 aa).

The segment covering 1–13 has biased composition (low complexity); sequence MASVASSTVFASS. Disordered stretches follow at residues 1 to 41 and 54 to 76; these read MASV…GRSV and VVTR…GGGR. A chloroplast-targeting transit peptide spans 1–57; that stretch reads MASVASSTVFASSLPHHRATTRAPPTPPRIPRRARLPGRSVVSCLPKRGSEKLVVTR. The next 7 helical transmembrane spans lie at 79 to 99, 117 to 137, 158 to 178, 203 to 223, 246 to 266, 286 to 306, and 318 to 338; these read PSLD…VLML, VVGD…LIFF, AIIF…SVVL, FLAA…AASG, GAGI…VFIA, LGVI…AVLG, and IVAY…LVEI.

It belongs to the GDT1 family.

The protein resides in the plastid. Its subcellular location is the chloroplast membrane. The polypeptide is GDT1-like protein 1, chloroplastic (Oryza sativa subsp. japonica (Rice)).